A 373-amino-acid polypeptide reads, in one-letter code: Cell division protein FtsZ 1 (373 aa).

GTP is bound by residues 51–55 (GAGCN), 138–140 (GTG), Glu169, Arg173, and Asp216. Positions 354–373 (EESYFGEEERRPIKLDLDEL) are disordered. Residues 360–373 (EEERRPIKLDLDEL) are compositionally biased toward basic and acidic residues.

Belongs to the FtsZ family. In terms of assembly, homodimer. Polymerizes to form a dynamic ring structure in a strictly GTP-dependent manner. Interacts directly with several other division proteins.

The protein resides in the cytoplasm. Functionally, essential cell division protein that forms a contractile ring structure (Z ring) at the future cell division site. The regulation of the ring assembly controls the timing and the location of cell division. One of the functions of the FtsZ ring is to recruit other cell division proteins to the septum to produce a new cell wall between the dividing cells. Binds GTP and shows GTPase activity. This Thermococcus kodakarensis (strain ATCC BAA-918 / JCM 12380 / KOD1) (Pyrococcus kodakaraensis (strain KOD1)) protein is Cell division protein FtsZ 1.